We begin with the raw amino-acid sequence, 1113 residues long: Protein MGA2 (1113 aa).

The interval 91–114 (TPLEEEMESNRALKEEEEDEHENK) is disordered. Serine 255 carries the post-translational modification Phosphoserine. Polar residues-rich tracts occupy residues 344-357 (DTTK…SSRR) and 437-452 (HIPS…SESF). 2 disordered regions span residues 344–376 (DTTK…NNQL) and 437–462 (HIPS…NDNP). A Phosphoserine modification is found at serine 467. The IPT/TIG domain occupies 530-610 (PSINRVIPSQ…NENNNDDLPQ (81 aa)). The interval 658–687 (IVGNDSPDSGTNGNSCSKSTGPSPNQHSMN) is disordered. Over residues 663-687 (SPDSGTNGNSCSKSTGPSPNQHSMN) the composition is skewed to polar residues. ANK repeat units lie at residues 719 to 748 (LGRT…RVND) and 752 to 781 (FGLT…NYSL). Residues 1037–1054 (MLIFFWIPLTLLLLTWFI) form a helical membrane-spanning segment.

It localises to the membrane. The polypeptide is Protein MGA2 (MGA2) (Saccharomyces cerevisiae (strain ATCC 204508 / S288c) (Baker's yeast)).